The chain runs to 988 residues: Transposase for transposon Tn1546 (988 aa).

Belongs to the transposase 7 family.

Functionally, required for transposition of transposon Tn1546. This is Transposase for transposon Tn1546 from Enterococcus faecium (Streptococcus faecium).